A 100-amino-acid polypeptide reads, in one-letter code: Small ribosomal subunit protein uS14c (100 aa).

Belongs to the universal ribosomal protein uS14 family. In terms of assembly, part of the 30S ribosomal subunit.

Its subcellular location is the plastid. It is found in the chloroplast. Functionally, binds 16S rRNA, required for the assembly of 30S particles. The polypeptide is Small ribosomal subunit protein uS14c (Amborella trichopoda).